Here is a 367-residue protein sequence, read N- to C-terminus: Outer membrane protein assembly factor BamC (367 aa).

The signal sequence occupies residues 1–16 (MRLLPLFLMVTLAASG). Residue Cys17 is the site of N-palmitoyl cysteine attachment. Cys17 carries the S-diacylglycerol cysteine lipid modification.

This sequence belongs to the BamC family. In terms of assembly, part of the Bam complex.

The protein resides in the cell outer membrane. Part of the outer membrane protein assembly complex, which is involved in assembly and insertion of beta-barrel proteins into the outer membrane. This chain is Outer membrane protein assembly factor BamC, found in Thiobacillus denitrificans (strain ATCC 25259 / T1).